Reading from the N-terminus, the 111-residue chain is Nucleoid-associated protein NMC1380 (111 aa).

This sequence belongs to the YbaB/EbfC family. Homodimer.

The protein localises to the cytoplasm. It localises to the nucleoid. Binds to DNA and alters its conformation. May be involved in regulation of gene expression, nucleoid organization and DNA protection. This chain is Nucleoid-associated protein NMC1380, found in Neisseria meningitidis serogroup C / serotype 2a (strain ATCC 700532 / DSM 15464 / FAM18).